We begin with the raw amino-acid sequence, 257 residues long: Ribonuclease PH (257 aa).

Residues arginine 86 and 124-126 (GTR) contribute to the phosphate site.

This sequence belongs to the RNase PH family. In terms of assembly, homohexameric ring arranged as a trimer of dimers.

It carries out the reaction tRNA(n+1) + phosphate = tRNA(n) + a ribonucleoside 5'-diphosphate. Its function is as follows. Phosphorolytic 3'-5' exoribonuclease that plays an important role in tRNA 3'-end maturation. Removes nucleotide residues following the 3'-CCA terminus of tRNAs; can also add nucleotides to the ends of RNA molecules by using nucleoside diphosphates as substrates, but this may not be physiologically important. Probably plays a role in initiation of 16S rRNA degradation (leading to ribosome degradation) during starvation. The protein is Ribonuclease PH of Halalkalibacterium halodurans (strain ATCC BAA-125 / DSM 18197 / FERM 7344 / JCM 9153 / C-125) (Bacillus halodurans).